The following is a 103-amino-acid chain: Alkanal monooxygenase alpha chain (103 aa).

As to quaternary structure, heterodimer of an alpha and a beta chain.

It catalyses the reaction a long-chain fatty aldehyde + FMNH2 + O2 = a long-chain fatty acid + hnu + FMN + H2O + 2 H(+). Functionally, light-emitting reaction in luminous bacteria. The protein is Alkanal monooxygenase alpha chain (luxA) of Vibrio cholerae.